A 207-amino-acid polypeptide reads, in one-letter code: Large ribosomal subunit protein uL4 (207 aa).

A disordered region spans residues 55 to 75; that stretch reads SAVRGGGRKPWRQKGTGRARQ. Over residues 60 to 71 the composition is skewed to basic residues; the sequence is GGRKPWRQKGTG.

Belongs to the universal ribosomal protein uL4 family. As to quaternary structure, part of the 50S ribosomal subunit.

One of the primary rRNA binding proteins, this protein initially binds near the 5'-end of the 23S rRNA. It is important during the early stages of 50S assembly. It makes multiple contacts with different domains of the 23S rRNA in the assembled 50S subunit and ribosome. Its function is as follows. Forms part of the polypeptide exit tunnel. This Staphylococcus epidermidis (strain ATCC 35984 / DSM 28319 / BCRC 17069 / CCUG 31568 / BM 3577 / RP62A) protein is Large ribosomal subunit protein uL4.